Reading from the N-terminus, the 197-residue chain is Phosphoheptose isomerase (197 aa).

One can recognise an SIS domain in the interval 36-197 (MVNALLNEGK…IDSQLFGSEE (162 aa)). Position 51–53 (51–53 (NGG)) interacts with substrate. Zn(2+) is bound by residues His-60 and Glu-64. Substrate contacts are provided by residues Glu-64, 93–94 (ND), 119–121 (STS), Ser-124, and Gln-174. Residues Gln-174 and His-182 each coordinate Zn(2+).

The protein belongs to the SIS family. GmhA subfamily. As to quaternary structure, homotetramer. Zn(2+) serves as cofactor.

Its subcellular location is the cytoplasm. It carries out the reaction 2 D-sedoheptulose 7-phosphate = D-glycero-alpha-D-manno-heptose 7-phosphate + D-glycero-beta-D-manno-heptose 7-phosphate. Its pathway is carbohydrate biosynthesis; D-glycero-D-manno-heptose 7-phosphate biosynthesis; D-glycero-alpha-D-manno-heptose 7-phosphate and D-glycero-beta-D-manno-heptose 7-phosphate from sedoheptulose 7-phosphate: step 1/1. Its function is as follows. Catalyzes the isomerization of sedoheptulose 7-phosphate in D-glycero-D-manno-heptose 7-phosphate. This chain is Phosphoheptose isomerase, found in Pseudomonas fluorescens (strain Pf0-1).